The primary structure comprises 118 residues: Putative pterin-4-alpha-carbinolamine dehydratase (118 aa).

It belongs to the pterin-4-alpha-carbinolamine dehydratase family.

It catalyses the reaction (4aS,6R)-4a-hydroxy-L-erythro-5,6,7,8-tetrahydrobiopterin = (6R)-L-erythro-6,7-dihydrobiopterin + H2O. The chain is Putative pterin-4-alpha-carbinolamine dehydratase (phhB) from Xanthomonas axonopodis pv. citri (strain 306).